The sequence spans 597 residues: MDHIRNFSIIAHIDHGKSTLADRIIQLCGGLSDREMESQVLDSMDLERERGITIKAQTAALTYRARDGKVYNLNLIDTPGHVDFSYEVSRSLSACEGALLVVDASQGVEAQTVANCYTAIELGVEVVPVLNKIDLPAANPENAIAEIEDVIGIDAMDAVRCSAKTGLGVEDVLESLIAKVPPPKGDPDAPLQALIIDSWFDNYVGVVMLVRIVNGTLRPKERIKLMATDAQYAVEHVGVFTPKSRNLESLSAGQVGFIISGIKELTAAKVGDTVTHATKPAPEPLPGFKEVKPQVFAGLYPVEANQYDALRESLEKLKLNDASLQYEPEVSQALGFGFRCGFLGLLHMEIVQERLEREFDMDLITTAPTVVYEVVQSDGTTIMVENPAKMPEPARIAEIREPIVTVNLYMPQDYVGSVITLCEQKRGTQINMQYHGRQVQLTYEIPMAEIVLDFFDRLKSVSRGYASMDYEFKEYRTSDVVKVDMLINGDKVDALSIIVHRSQSQYRGREVAAKMREIIPRQMYDVAIQAAIGAHIIARENIKALRKNVLAKCYGGDITRKKKLLEKQKEGKKRMKQVGSVEIPQEAFLAILRVEDK.

Residues 2 to 184 form the tr-type G domain; the sequence is DHIRNFSIIA…SLIAKVPPPK (183 aa). GTP contacts are provided by residues 14–19 and 131–134; these read DHGKST and NKID.

The protein belongs to the TRAFAC class translation factor GTPase superfamily. Classic translation factor GTPase family. LepA subfamily.

It is found in the cell inner membrane. It catalyses the reaction GTP + H2O = GDP + phosphate + H(+). Functionally, required for accurate and efficient protein synthesis under certain stress conditions. May act as a fidelity factor of the translation reaction, by catalyzing a one-codon backward translocation of tRNAs on improperly translocated ribosomes. Back-translocation proceeds from a post-translocation (POST) complex to a pre-translocation (PRE) complex, thus giving elongation factor G a second chance to translocate the tRNAs correctly. Binds to ribosomes in a GTP-dependent manner. The protein is Elongation factor 4 of Burkholderia pseudomallei (strain 1710b).